The primary structure comprises 102 residues: MAKQKIRIRLKAYDHRILDQSAEKIVETAKRSGASVSGPIPLPTEKSVYTILRAVHKYKDSREQFEMRTHKRLIDIVNPTPQTVDALMRLDLPSGVDIEIKL.

The protein belongs to the universal ribosomal protein uS10 family. As to quaternary structure, part of the 30S ribosomal subunit.

Involved in the binding of tRNA to the ribosomes. The protein is Small ribosomal subunit protein uS10 (rpsJ) of Bacillus subtilis (strain 168).